We begin with the raw amino-acid sequence, 407 residues long: Accessory Sec system protein translocase subunit SecY2 (407 aa).

A run of 10 helical transmembrane segments spans residues 22–42 (IAFTILILLIYILGSKITIVD), 68–88 (LNVFSLGLGPWLTAMIIISLI), 108–128 (EKFLTLGLSIIQGYFVINQFV), 136–156 (FTELLLLLILVTGAMLMMWLA), 169–189 (PIVLLSVIKSMFTQSLPIVSI), 191–211 (ILMLVVMVILIIVALFILLLT), 245–265 (ISIMISLSVFLLLTSTINLIF), 280–300 (FGHYMGVTIYLILQTVLGYLL), 343–363 (WFGTTIVTAIIGVPLYISLLV), and 366–386 (LSEYIYFAVQLMIMVYLAMNI).

Belongs to the SecY/SEC61-alpha family. SecY2 subfamily. As to quaternary structure, component of the accessory SecA2/SecY2 protein translocase complex required to export cell wall proteins. May form heterotrimers with SecE and SecG subunits.

The protein localises to the cell membrane. In terms of biological role, part of the accessory SecA2/SecY2 system specifically required for export of possible cell wall proteins. The central subunit of a protein translocation channel. In Staphylococcus pseudintermedius (strain ED99), this protein is Accessory Sec system protein translocase subunit SecY2.